The chain runs to 132 residues: DNA-directed RNA polymerase subunit omega (132 aa).

Residues 76–105 (EVDEPEQDAASIAEGQLTSGSQDEDEMPET) form a disordered region.

The protein belongs to the RNA polymerase subunit omega family. As to quaternary structure, the RNAP catalytic core consists of 2 alpha, 1 beta, 1 beta' and 1 omega subunit. When a sigma factor is associated with the core the holoenzyme is formed, which can initiate transcription.

It catalyses the reaction RNA(n) + a ribonucleoside 5'-triphosphate = RNA(n+1) + diphosphate. Promotes RNA polymerase assembly. Latches the N- and C-terminal regions of the beta' subunit thereby facilitating its interaction with the beta and alpha subunits. The chain is DNA-directed RNA polymerase subunit omega from Allorhizobium ampelinum (strain ATCC BAA-846 / DSM 112012 / S4) (Agrobacterium vitis (strain S4)).